The chain runs to 368 residues: MRGAMLNPIVIAAGGTGGHMVPAESVADELMRRGQRIVLMTDARSAGQKSAVFAGCERHVLAGAGLAGRSLGRRLLGVAQLARGTVAARHILAKLDAAAVVGFGGYPSVPPVLAAATLRRRPAIVLHDQNAVLGGANRFLARFADHLALSFEGTVGLPGRARATVTGNPVRAAISVLAASPYEPPAETIRLLVLGGSLGARIFATLVPEALARLPEGLRRRIALTMQCPGEAIGAARGALDAAGITHELAPFFSDVAPRMAAAHLLVARSGGSTVAEVATIGRPAIFIPLAINTDQRHNADVLARRGGAFRLDQATTTPDRLAGVLESLLDDPLRLAAMAEAAASARIEEAAARLADLVLSAIAERVR.

UDP-N-acetyl-alpha-D-glucosamine contacts are provided by residues 16–18, Asn-130, Arg-171, Ser-197, and Gln-296; that span reads TGG.

It belongs to the glycosyltransferase 28 family. MurG subfamily.

The protein resides in the cell inner membrane. The catalysed reaction is di-trans,octa-cis-undecaprenyl diphospho-N-acetyl-alpha-D-muramoyl-L-alanyl-D-glutamyl-meso-2,6-diaminopimeloyl-D-alanyl-D-alanine + UDP-N-acetyl-alpha-D-glucosamine = di-trans,octa-cis-undecaprenyl diphospho-[N-acetyl-alpha-D-glucosaminyl-(1-&gt;4)]-N-acetyl-alpha-D-muramoyl-L-alanyl-D-glutamyl-meso-2,6-diaminopimeloyl-D-alanyl-D-alanine + UDP + H(+). It participates in cell wall biogenesis; peptidoglycan biosynthesis. Functionally, cell wall formation. Catalyzes the transfer of a GlcNAc subunit on undecaprenyl-pyrophosphoryl-MurNAc-pentapeptide (lipid intermediate I) to form undecaprenyl-pyrophosphoryl-MurNAc-(pentapeptide)GlcNAc (lipid intermediate II). The protein is UDP-N-acetylglucosamine--N-acetylmuramyl-(pentapeptide) pyrophosphoryl-undecaprenol N-acetylglucosamine transferase of Acidiphilium cryptum (strain JF-5).